A 56-amino-acid chain; its full sequence is Probable head completion protein 2 (56 aa).

This sequence belongs to the skunalikevirus head completion protein 2 family.

It is found in the virion. Probably functions as a stopper that is part of the head-tail connector and that locks the viral DNA in the capsid. During assembly, functions as a docking platform which the preassembled tail can bind to. Plays a role in morphogenesis of the virion capsid after genome packaging. This Lactococcus lactis (Lactococcus lactis bacteriophage SK1) protein is Probable head completion protein 2.